The sequence spans 551 residues: Probable 4-coumarate--CoA ligase 3 (551 aa).

The ATP site is built by Ser205, Ser206, Gly207, Thr208, Thr209, and Lys213. Residue Phe253 participates in (E)-4-coumaroyl-AMP binding. Residue Lys274 coordinates CoA. Positions 276 to 346 (EPVRFLELIK…RFKGRLVIKQ (71 aa)) are SBD1. (E)-4-coumaroyl-AMP-binding residues include Ala323, Gln346, Gly347, and Thr351. ATP contacts are provided by Gln346, Gly347, Thr351, Asp430, and Arg445. The interval 347 to 409 (GYGATELSPC…IKGPNVMLGY (63 aa)) is SBD2. (E)-4-coumaroyl-AMP contacts are provided by Lys447 and Lys451. Residues Lys453 and Gly454 each contribute to the CoA site. An ATP-binding site is contributed by Lys537.

It belongs to the ATP-dependent AMP-binding enzyme family. Mg(2+) serves as cofactor.

It catalyses the reaction (E)-4-coumarate + ATP + CoA = (E)-4-coumaroyl-CoA + AMP + diphosphate. The enzyme catalyses (E)-4-coumarate + ATP + H(+) = (E)-4-coumaroyl-AMP + diphosphate. The catalysed reaction is (E)-4-coumaroyl-AMP + CoA = (E)-4-coumaroyl-CoA + AMP + H(+). It functions in the pathway phytoalexin biosynthesis; 3,4',5-trihydroxystilbene biosynthesis; 3,4',5-trihydroxystilbene from trans-4-coumarate: step 1/2. Its function is as follows. Carboxylate--CoA ligase that may use 4-coumarate as substrate. Follows a two-step reaction mechanism, wherein the carboxylate substrate first undergoes adenylation by ATP, followed by a thioesterification in the presence of CoA to yield the final CoA thioester. The protein is Probable 4-coumarate--CoA ligase 3 (4cl3) of Dictyostelium discoideum (Social amoeba).